Consider the following 133-residue polypeptide: UPF0768 protein C977.18 (133 aa).

The protein belongs to the UPF0768 family.

This chain is UPF0768 protein C977.18, found in Schizosaccharomyces pombe (strain 972 / ATCC 24843) (Fission yeast).